The sequence spans 232 residues: dTTP/UTP pyrophosphatase (232 aa).

Asp103 (proton acceptor) is an active-site residue.

The protein belongs to the Maf family. YhdE subfamily. A divalent metal cation is required as a cofactor.

The protein localises to the cytoplasm. It catalyses the reaction dTTP + H2O = dTMP + diphosphate + H(+). The enzyme catalyses UTP + H2O = UMP + diphosphate + H(+). In terms of biological role, nucleoside triphosphate pyrophosphatase that hydrolyzes dTTP and UTP. May have a dual role in cell division arrest and in preventing the incorporation of modified nucleotides into cellular nucleic acids. The chain is dTTP/UTP pyrophosphatase from Bartonella henselae (strain ATCC 49882 / DSM 28221 / CCUG 30454 / Houston 1) (Rochalimaea henselae).